Here is a 461-residue protein sequence, read N- to C-terminus: Fumarate hydratase class II (461 aa).

Substrate is bound by residues 97-99, 127-130, 137-139, and Thr-185; these read SGT, HPND, and SSN. His-186 (proton donor/acceptor) is an active-site residue. Ser-316 is a catalytic residue. Substrate contacts are provided by residues Ser-317 and 322-324; that span reads KVN.

Belongs to the class-II fumarase/aspartase family. Fumarase subfamily. Homotetramer.

The protein localises to the cytoplasm. The catalysed reaction is (S)-malate = fumarate + H2O. It functions in the pathway carbohydrate metabolism; tricarboxylic acid cycle; (S)-malate from fumarate: step 1/1. Its function is as follows. Involved in the TCA cycle. Catalyzes the stereospecific interconversion of fumarate to L-malate. In Staphylococcus aureus (strain MSSA476), this protein is Fumarate hydratase class II.